Reading from the N-terminus, the 90-residue chain is Kunitz-type serine protease inhibitor C5 (90 aa).

The signal sequence occupies residues 1–24 (MSSGGLLLLLALLTLWAELTPISG). The region spanning 31 to 81 (CNLAPESGRCRGHLRRIYYNPDSNKCEVFFYGGCGGNDNNFETRKKCRQTC) is the BPTI/Kunitz inhibitor domain. Intrachain disulfides connect Cys-31–Cys-81, Cys-40–Cys-64, and Cys-56–Cys-77. The propeptide occupies 85–90 (RKGRPT).

The protein belongs to the venom Kunitz-type family. Expressed by the venom gland.

The protein resides in the secreted. In terms of biological role, serine protease inhibitor that inhibits trypsin. The chain is Kunitz-type serine protease inhibitor C5 from Daboia siamensis (Eastern Russel's viper).